The following is a 353-amino-acid chain: Histidine biosynthesis bifunctional protein HisB (353 aa).

The tract at residues 1–164 (MKNKILFIDR…HITKYIIKHN (164 aa)) is histidinol-phosphatase. The active-site Nucleophile is the aspartate 9. Mg(2+) contacts are provided by aspartate 9 and aspartate 11. Aspartate 11 acts as the Proton donor in catalysis. 4 residues coordinate Zn(2+): cysteine 93, histidine 95, cysteine 101, and cysteine 103. A Mg(2+)-binding site is contributed by aspartate 128. Residues 165-353 (RYAEIIRRTK…NMLPTSKGIL (189 aa)) form an imidazoleglycerol-phosphate dehydratase region.

In the N-terminal section; belongs to the histidinol-phosphatase family. This sequence in the C-terminal section; belongs to the imidazoleglycerol-phosphate dehydratase family. The cofactor is Mg(2+). Zn(2+) serves as cofactor.

The protein localises to the cytoplasm. It catalyses the reaction D-erythro-1-(imidazol-4-yl)glycerol 3-phosphate = 3-(imidazol-4-yl)-2-oxopropyl phosphate + H2O. The catalysed reaction is L-histidinol phosphate + H2O = L-histidinol + phosphate. The protein operates within amino-acid biosynthesis; L-histidine biosynthesis; L-histidine from 5-phospho-alpha-D-ribose 1-diphosphate: step 6/9. It participates in amino-acid biosynthesis; L-histidine biosynthesis; L-histidine from 5-phospho-alpha-D-ribose 1-diphosphate: step 8/9. This Buchnera aphidicola subsp. Acyrthosiphon pisum (strain Tuc7) protein is Histidine biosynthesis bifunctional protein HisB.